Reading from the N-terminus, the 92-residue chain is Small ribosomal subunit protein uS17 (92 aa).

Belongs to the universal ribosomal protein uS17 family. As to quaternary structure, part of the 30S ribosomal subunit.

In terms of biological role, one of the primary rRNA binding proteins, it binds specifically to the 5'-end of 16S ribosomal RNA. The polypeptide is Small ribosomal subunit protein uS17 (Corynebacterium urealyticum (strain ATCC 43042 / DSM 7109)).